A 137-amino-acid chain; its full sequence is Holo-[acyl-carrier-protein] synthase (137 aa).

2 residues coordinate Mg(2+): Asp-8 and Glu-57.

This sequence belongs to the P-Pant transferase superfamily. AcpS family. It depends on Mg(2+) as a cofactor.

The protein localises to the cytoplasm. The catalysed reaction is apo-[ACP] + CoA = holo-[ACP] + adenosine 3',5'-bisphosphate + H(+). In terms of biological role, transfers the 4'-phosphopantetheine moiety from coenzyme A to a Ser of acyl-carrier-protein. This is Holo-[acyl-carrier-protein] synthase from Cereibacter sphaeroides (strain ATCC 17029 / ATH 2.4.9) (Rhodobacter sphaeroides).